Consider the following 488-residue polypeptide: Galactose-1-phosphate uridylyltransferase (488 aa).

This sequence belongs to the galactose-1-phosphate uridylyltransferase type 2 family.

Its subcellular location is the cytoplasm. It carries out the reaction alpha-D-galactose 1-phosphate + UDP-alpha-D-glucose = alpha-D-glucose 1-phosphate + UDP-alpha-D-galactose. Its pathway is carbohydrate metabolism; galactose metabolism. This chain is Galactose-1-phosphate uridylyltransferase (galT), found in Lactobacillus helveticus (Lactobacillus suntoryeus).